Reading from the N-terminus, the 100-residue chain is A-type ATP synthase subunit F (100 aa).

Belongs to the V-ATPase F subunit family. Has multiple subunits with at least A(3), B(3), C, D, E, F, H, I and proteolipid K(x).

The protein localises to the cell membrane. In terms of biological role, component of the A-type ATP synthase that produces ATP from ADP in the presence of a proton gradient across the membrane. This is A-type ATP synthase subunit F from Methanospirillum hungatei JF-1 (strain ATCC 27890 / DSM 864 / NBRC 100397 / JF-1).